We begin with the raw amino-acid sequence, 391 residues long: D-alanine--D-alanine ligase (391 aa).

A disordered region spans residues 1–24 (MSSENLPQSPERAESPQAPRRKPR). The 211-residue stretch at 171–381 (KRVFLSFGLP…YPELVDRLIQ (211 aa)) folds into the ATP-grasp domain. 207–262 (AGEHGWPLFIKPARGGSSMGITKVDSVEGLDAAIEEARRHDPKFLVESLLRGREIE) lines the ATP pocket. Mg(2+)-binding residues include Asp-335, Glu-348, and Asn-350.

It belongs to the D-alanine--D-alanine ligase family. It depends on Mg(2+) as a cofactor. Requires Mn(2+) as cofactor.

The protein localises to the cytoplasm. It catalyses the reaction 2 D-alanine + ATP = D-alanyl-D-alanine + ADP + phosphate + H(+). The protein operates within cell wall biogenesis; peptidoglycan biosynthesis. Its function is as follows. Cell wall formation. The polypeptide is D-alanine--D-alanine ligase (Streptomyces griseus subsp. griseus (strain JCM 4626 / CBS 651.72 / NBRC 13350 / KCC S-0626 / ISP 5235)).